Here is a 597-residue protein sequence, read N- to C-terminus: Elongation factor 4 (597 aa).

One can recognise a tr-type G domain in the interval 2-184; it reads KNIRNFSIIA…TIVAKVPAPE (183 aa). Residues 14 to 19 and 131 to 134 contribute to the GTP site; these read DHGKST and NKID.

The protein belongs to the TRAFAC class translation factor GTPase superfamily. Classic translation factor GTPase family. LepA subfamily.

It localises to the cell inner membrane. The enzyme catalyses GTP + H2O = GDP + phosphate + H(+). Its function is as follows. Required for accurate and efficient protein synthesis under certain stress conditions. May act as a fidelity factor of the translation reaction, by catalyzing a one-codon backward translocation of tRNAs on improperly translocated ribosomes. Back-translocation proceeds from a post-translocation (POST) complex to a pre-translocation (PRE) complex, thus giving elongation factor G a second chance to translocate the tRNAs correctly. Binds to ribosomes in a GTP-dependent manner. This chain is Elongation factor 4, found in Francisella tularensis subsp. mediasiatica (strain FSC147).